A 360-amino-acid chain; its full sequence is Phospho-N-acetylmuramoyl-pentapeptide-transferase (360 aa).

10 helical membrane passes run 21–41 (YVTF…LWWG), 74–94 (MGGL…GDLG), 97–117 (YVWV…IDDY), 135–155 (LLQS…ADTA), 168–188 (VMPQ…VGSS), 199–219 (GLAI…AYLS), 236–256 (AGEL…FLWF), 263–283 (VFMG…IAVL), 288–308 (ILLV…ILQV), and 338–358 (VIVR…ATLK).

This sequence belongs to the glycosyltransferase 4 family. MraY subfamily. Requires Mg(2+) as cofactor.

It is found in the cell inner membrane. It carries out the reaction UDP-N-acetyl-alpha-D-muramoyl-L-alanyl-gamma-D-glutamyl-meso-2,6-diaminopimeloyl-D-alanyl-D-alanine + di-trans,octa-cis-undecaprenyl phosphate = di-trans,octa-cis-undecaprenyl diphospho-N-acetyl-alpha-D-muramoyl-L-alanyl-D-glutamyl-meso-2,6-diaminopimeloyl-D-alanyl-D-alanine + UMP. It functions in the pathway cell wall biogenesis; peptidoglycan biosynthesis. In terms of biological role, catalyzes the initial step of the lipid cycle reactions in the biosynthesis of the cell wall peptidoglycan: transfers peptidoglycan precursor phospho-MurNAc-pentapeptide from UDP-MurNAc-pentapeptide onto the lipid carrier undecaprenyl phosphate, yielding undecaprenyl-pyrophosphoryl-MurNAc-pentapeptide, known as lipid I. In Shewanella piezotolerans (strain WP3 / JCM 13877), this protein is Phospho-N-acetylmuramoyl-pentapeptide-transferase.